We begin with the raw amino-acid sequence, 467 residues long: Methylenetetrahydrofolate--tRNA-(uracil-5-)-methyltransferase TrmFO (467 aa).

11-16 provides a ligand contact to FAD; it reads GAGLAG.

It belongs to the MnmG family. TrmFO subfamily. Requires FAD as cofactor.

It is found in the cytoplasm. It catalyses the reaction uridine(54) in tRNA + (6R)-5,10-methylene-5,6,7,8-tetrahydrofolate + NADH + H(+) = 5-methyluridine(54) in tRNA + (6S)-5,6,7,8-tetrahydrofolate + NAD(+). The catalysed reaction is uridine(54) in tRNA + (6R)-5,10-methylene-5,6,7,8-tetrahydrofolate + NADPH + H(+) = 5-methyluridine(54) in tRNA + (6S)-5,6,7,8-tetrahydrofolate + NADP(+). Catalyzes the folate-dependent formation of 5-methyl-uridine at position 54 (M-5-U54) in all tRNAs. This is Methylenetetrahydrofolate--tRNA-(uracil-5-)-methyltransferase TrmFO from Prochlorococcus marinus (strain NATL1A).